The following is a 135-amino-acid chain: Large ribosomal subunit protein uL16 (135 aa).

This sequence belongs to the universal ribosomal protein uL16 family. In terms of assembly, part of the 50S ribosomal subunit.

Functionally, binds 23S rRNA and is also seen to make contacts with the A and possibly P site tRNAs. This is Large ribosomal subunit protein uL16 from Bdellovibrio bacteriovorus (strain ATCC 15356 / DSM 50701 / NCIMB 9529 / HD100).